A 611-amino-acid chain; its full sequence is tRNA uridine 5-carboxymethylaminomethyl modification enzyme MnmG (611 aa).

Position 14 to 19 (14 to 19 (GAGHAG)) interacts with FAD. 274-288 (GPRYCPSIEDKIVKF) serves as a coordination point for NAD(+).

It belongs to the MnmG family. Homodimer. Heterotetramer of two MnmE and two MnmG subunits. FAD is required as a cofactor.

The protein resides in the cytoplasm. NAD-binding protein involved in the addition of a carboxymethylaminomethyl (cmnm) group at the wobble position (U34) of certain tRNAs, forming tRNA-cmnm(5)s(2)U34. This chain is tRNA uridine 5-carboxymethylaminomethyl modification enzyme MnmG, found in Chlamydia abortus (strain DSM 27085 / S26/3) (Chlamydophila abortus).